A 174-amino-acid chain; its full sequence is Beta-lactoglobulin (174 aa).

Residues 1–18 (MKFLLLTVGLALIGAIQA) form the signal peptide. Cystine bridges form between Cys79–Cys172 and Cys122–Cys134.

It belongs to the calycin superfamily. Lipocalin family. Monomer.

The protein resides in the secreted. In terms of biological role, lactoglobulin is the primary component of whey, it binds retinol and is probably involved in the transport of that molecule. The sequence is that of Beta-lactoglobulin (LGB) from Notamacropus eugenii (Tammar wallaby).